Consider the following 486-residue polypeptide: Mogroside I-E synthase (486 aa).

Residues Ser-302, Cys-360, Gln-362, Trp-380, Asn-381, Ser-382, Glu-385, Asp-401, and Gln-402 each contribute to the UDP-alpha-D-glucose site.

This sequence belongs to the UDP-glycosyltransferase family. In terms of tissue distribution, highly expressed in young fruits 15 days after anthesis (15-DAA).

It carries out the reaction mogrol + UDP-alpha-D-glucose = mogroside IE + UDP + H(+). The enzyme catalyses mogroside I-A1 + UDP-alpha-D-glucose = mogroside IIE + UDP + H(+). It catalyses the reaction mogroside II-A1 + UDP-alpha-D-glucose = mogroside IIIX + UDP + H(+). The catalysed reaction is mogroside II-A + UDP-alpha-D-glucose = mogroside III + UDP + H(+). It functions in the pathway secondary metabolite biosynthesis; terpenoid biosynthesis. Functionally, UDP-glycosyltransferase involved in the biosynthesis of cucurbitacin and mogroside tetracyclic triterpene natural products (e.g. siamenoside I and mogrosides IV, V and VI). Cucurbitacins have cytotoxic properties and exhibit deterrent taste as a defense barrier against herbivores. Mogrosides are nonsugar highly oxygenated compounds used as high-intensity zero-calorie sweeteners; they also possess pharmacological properties such as regulating immunity, lowering blood sugar and lipid levels, protecting the liver, and acting as antioxidants and antitumor agents. Catalyzes the C3 primary glucosylation of mogrol, mogroside I-A1, mogroside II-A1 and mogroside II-A. The sequence is that of Mogroside I-E synthase from Siraitia grosvenorii (Monk's fruit).